The sequence spans 512 residues: MAISPTATELLLASFAFCLVFWVVRAWQPRVPKGLKSPPGPWGWPLLGHVLTLGKNPHLVLARLSQRYGDVLQIRIGSTPVLVLSGLDTIRQALVQQGDDFKGRPNLYSFSLVTDGHSMSFSPDSGPVWAARRRLAQSALNTFSIASDPASSSSCYLEDHVSKEAEALLSRLQEQMAEVGSFDPHSQVVLSVANVIGAMCFGQHFPQDSEEKLSLIHSSNIFVENAYSGNPVDFFPILQYIPTPGLQRFKAFNQKLVQFLQKIIQEHYQDFDENNIQDITGALLKHCKKGSRANGGRIPHEKIVSLINDIFGAGFDTVTTAISWSLMYLVTNPEKQRKIQEELDTVVGRARRPRLSDRLQLPYLEASILEIFRHSSFIPFTVPHSTTRDTTLNGFYIPEKHLVFINQWQVNHDQKVWGDPFEFRPERFLTADGTAINKILSEKVMIFGLGKRRCIGEVLAKWEVFLFLAILLQQLEFSVPAGVKVDLTPIYGLTMRHVRCEHVQARPRFSIK.

A glycan (O-linked (GlcNAc) serine) is linked at Ser-65. Phe-222 is a binding site for substrate. Cys-454 provides a ligand contact to heme.

This sequence belongs to the cytochrome P450 family. In terms of assembly, interacts with PGRMC1; the interaction requires PGRMC1 homodimerization. The cofactor is heme.

The protein localises to the endoplasmic reticulum membrane. Its subcellular location is the microsome membrane. It catalyses the reaction an organic molecule + reduced [NADPH--hemoprotein reductase] + O2 = an alcohol + oxidized [NADPH--hemoprotein reductase] + H2O + H(+). The enzyme catalyses 17beta-estradiol + reduced [NADPH--hemoprotein reductase] + O2 = 2-hydroxy-17beta-estradiol + oxidized [NADPH--hemoprotein reductase] + H2O + H(+). The catalysed reaction is 17beta-estradiol + reduced [NADPH--hemoprotein reductase] + O2 = 4-hydroxy-17beta-estradiol + oxidized [NADPH--hemoprotein reductase] + H2O + H(+). It carries out the reaction estrone + reduced [NADPH--hemoprotein reductase] + O2 = 2-hydroxyestrone + oxidized [NADPH--hemoprotein reductase] + H2O + H(+). It catalyses the reaction estrone + reduced [NADPH--hemoprotein reductase] + O2 = 4-hydroxyestrone + oxidized [NADPH--hemoprotein reductase] + H2O + H(+). The enzyme catalyses cholesterol + reduced [NADPH--hemoprotein reductase] + O2 = 25-hydroxycholesterol + oxidized [NADPH--hemoprotein reductase] + H2O + H(+). The catalysed reaction is all-trans-retinol + reduced [NADPH--hemoprotein reductase] + O2 = all-trans-retinal + oxidized [NADPH--hemoprotein reductase] + 2 H2O + H(+). It carries out the reaction all-trans-retinal + reduced [NADPH--hemoprotein reductase] + O2 = all-trans-retinoate + oxidized [NADPH--hemoprotein reductase] + H2O + 2 H(+). It catalyses the reaction (5Z,8Z,11Z,14Z)-eicosatetraenoate + reduced [NADPH--hemoprotein reductase] + O2 = (14R,15S)-epoxy-(5Z,8Z,11Z)-eicosatrienoate + oxidized [NADPH--hemoprotein reductase] + H2O + H(+). The enzyme catalyses (5Z,8Z,11Z,14Z)-eicosatetraenoate + reduced [NADPH--hemoprotein reductase] + O2 = (14S,15R)-epoxy-(5Z,8Z,11Z)-eicosatrienoate + oxidized [NADPH--hemoprotein reductase] + H2O + H(+). The catalysed reaction is (5Z,8Z,11Z,14Z,17Z)-eicosapentaenoate + reduced [NADPH--hemoprotein reductase] + O2 = (17R,18S)-epoxy-(5Z,8Z,11Z,14Z)-eicosatetraenoate + oxidized [NADPH--hemoprotein reductase] + H2O + H(+). It carries out the reaction (4Z,7Z,10Z,13Z,16Z,19Z)-docosahexaenoate + reduced [NADPH--hemoprotein reductase] + O2 = (19R,20S)-epoxy-(4Z,7Z,10Z,13Z,16Z)-docosapentaenoate + oxidized [NADPH--hemoprotein reductase] + H2O + H(+). It catalyses the reaction (5S)-hydroperoxy-(6E,8Z,11Z,14Z)-eicosatetraenoate = 5-oxo-(6E,8Z,11Z,14Z)-eicosatetraenoate + H2O. The enzyme catalyses (12S)-hydroperoxy-(5Z,8Z,10E,14Z)-eicosatetraenoate = 12-oxo-(5Z,8Z,10E,14Z)-eicosatetraenoate + H2O. The catalysed reaction is (15S)-hydroperoxy-(5Z,8Z,11Z,13E)-eicosatetraenoate = 15-oxo-(5Z,8Z,11Z,13E)-eicosatetraenoate + H2O. It carries out the reaction (13S)-hydroperoxy-(9Z,11E)-octadecadienoate = 13-oxo-(9Z,11E)-octadecadienoate + H2O. It catalyses the reaction (5Z,8Z,11Z,14Z)-eicosatetraenoate + reduced [NADPH--hemoprotein reductase] + O2 = 13-hydroxy-(5Z,8Z,11Z,14Z)-eicosatetraenoate + oxidized [NADPH--hemoprotein reductase] + H2O + H(+). The enzyme catalyses (5Z,8Z,11Z,14Z)-eicosatetraenoate + reduced [NADPH--hemoprotein reductase] + O2 = 19-hydroxy-(5Z,8Z,11Z,14Z)-eicosatetraenoate + oxidized [NADPH--hemoprotein reductase] + H2O + H(+). The catalysed reaction is (9Z,12Z)-octadecadienoate + reduced [NADPH--hemoprotein reductase] + O2 = 11-hydroxy-(9Z,12Z)-octadecadienoate + oxidized [NADPH--hemoprotein reductase] + H2O + H(+). It participates in cofactor metabolism; retinol metabolism. It functions in the pathway steroid metabolism; cholesterol metabolism. Its pathway is lipid metabolism; arachidonate metabolism. Functionally, a cytochrome P450 monooxygenase involved in the metabolism of various endogenous substrates, including fatty acids, steroid hormones and vitamins. Mechanistically, uses molecular oxygen inserting one oxygen atom into a substrate, and reducing the second into a water molecule, with two electrons provided by NADPH via cytochrome P450 reductase (NADPH--hemoprotein reductase). Catalyzes the hydroxylation of carbon-hydrogen bonds. Exhibits high catalytic activity for the formation of hydroxyestrogens from estrone (E1) and 17beta-estradiol (E2), namely 2-hydroxy E1 and E2. Metabolizes cholesterol toward 25-hydroxycholesterol, a physiological regulator of cellular cholesterol homeostasis. May act as a major enzyme for all-trans retinoic acid biosynthesis in the liver. Catalyzes two successive oxidative transformation of all-trans retinol to all-trans retinal and then to the active form all-trans retinoic acid. Primarily catalyzes stereoselective epoxidation of the last double bond of polyunsaturated fatty acids (PUFA), displaying a strong preference for the (R,S) stereoisomer. Catalyzes bisallylic hydroxylation and omega-1 hydroxylation of PUFA. May also participate in eicosanoids metabolism by converting hydroperoxide species into oxo metabolites (lipoxygenase-like reaction, NADPH-independent). Plays a role in the oxidative metabolism of xenobiotics. Catalyzes the N-hydroxylation of heterocyclic amines and the O-deethylation of phenacetin. Metabolizes caffeine via N3-demethylation. The protein is Cytochrome P450 1A2 (CYP1A2) of Felis catus (Cat).